A 178-amino-acid polypeptide reads, in one-letter code: Interleukin-10 (178 aa).

Positions 1-18 are cleaved as a signal peptide; it reads MPSSALLYCLILLAGVRP. 2 disulfides stabilise this stretch: Cys30–Cys126 and Cys80–Cys132. The N-linked (GlcNAc...) asparagine glycan is linked to Asn134.

This sequence belongs to the IL-10 family. As to quaternary structure, homodimer. Interacts with IL10RA and IL10RB.

Its subcellular location is the secreted. In terms of biological role, major immune regulatory cytokine that acts on many cells of the immune system where it has profound anti-inflammatory functions, limiting excessive tissue disruption caused by inflammation. Mechanistically, IL10 binds to its heterotetrameric receptor comprising IL10RA and IL10RB leading to JAK1 and STAT2-mediated phosphorylation of STAT3. In turn, STAT3 translocates to the nucleus where it drives expression of anti-inflammatory mediators. Targets antigen-presenting cells (APCs) such as macrophages and monocytes and inhibits their release of pro-inflammatory cytokines including granulocyte-macrophage colony-stimulating factor /GM-CSF, granulocyte colony-stimulating factor/G-CSF, IL-1 alpha, IL-1 beta, IL-6, IL-8 and TNF-alpha. Also interferes with antigen presentation by reducing the expression of MHC-class II and co-stimulatory molecules, thereby inhibiting their ability to induce T cell activation. In addition, controls the inflammatory response of macrophages by reprogramming essential metabolic pathways including mTOR signaling. In Meriones unguiculatus (Mongolian jird), this protein is Interleukin-10 (IL10).